Here is a 54-residue protein sequence, read N- to C-terminus: Lectin alpha chain (54 aa).

This sequence belongs to the leguminous lectin family. Tetramer of two alpha and two beta chains.

This Lathyrus tingitanus (Tangier pea) protein is Lectin alpha chain.